Consider the following 324-residue polypeptide: Transcription factor MYB74 (324 aa).

2 HTH myb-type domains span residues 10 to 62 and 63 to 117; these read KNGL…TNYL and RPDI…RKRL. 2 consecutive DNA-binding regions (H-T-H motif) follow at residues 38 to 62 and 90 to 113; these read WRTL…TNYL and WSAI…NTHI.

As to expression, highly expressed in flowers and at lower levels in rosette leaves and cauline leaves. Expressed at low levels in roots, stems and siliques.

Its subcellular location is the nucleus. In terms of biological role, probable transcription factor that may function in salt stress response. In Arabidopsis thaliana (Mouse-ear cress), this protein is Transcription factor MYB74.